The sequence spans 728 residues: Prolyl 3-hydroxylase 1 (728 aa).

Positions 1–14 (MVAVAAAAASRATA) are cleaved as a signal peptide. TPR repeat units follow at residues 25–58 (PDLL…RAAL), 135–168 (RSPY…NPEH), 197–230 (HMHE…YFVA), and 293–326 (PSHY…FPND). An N-linked (GlcNAc...) asparagine glycan is attached at N308. The stretch at 393-431 (KRLQEKQKSERETAVRISQEIGNLMKEIETLVEEKTKES) forms a coiled coil. 3 N-linked (GlcNAc...) asparagine glycosylation sites follow: N450, N459, and N532. The region spanning 556 to 670 (SHLVCRTAIE…RCAIALWFTL (115 aa)) is the Fe2OG dioxygenase domain. Fe cation contacts are provided by H579, D581, and H651. Residue R661 is part of the active site. The tract at residues 691-728 (SPEEVDLPQEQPLPDQQGSPKPGEESLSDRESQPKDEL) is disordered. Over residues 698–707 (PQEQPLPDQQ) the composition is skewed to low complexity. Over residues 712-728 (PGEESLSDRESQPKDEL) the composition is skewed to basic and acidic residues. A Prevents secretion from ER motif is present at residues 725 to 728 (KDEL).

Belongs to the leprecan family. Requires Fe cation as cofactor. It depends on L-ascorbate as a cofactor. In terms of processing, O-glycosylated; chondroitin sulfate. In terms of tissue distribution, expressed in basement membranes of cardiac muscle, skeletal muscle, central nervous system, intestinal tract, trachea, ear, skin, liver and kidney. In kidney, localizes to the glomerular basement membrane, mesangial matrix and Bowman's capsule of the nephron. In the renal parenchyma, expressed in the basement membranes of tubules and blood vessels. In the ear and trachea, localizes to the perimeter of resident chondrocytes in lacunae.

It is found in the endoplasmic reticulum. The protein localises to the secreted. Its subcellular location is the extracellular space. The protein resides in the extracellular matrix. The catalysed reaction is L-prolyl-[collagen] + 2-oxoglutarate + O2 = trans-3-hydroxy-L-prolyl-[collagen] + succinate + CO2. Basement membrane-associated chondroitin sulfate proteoglycan (CSPG). Has prolyl 3-hydroxylase activity catalyzing the post-translational formation of 3-hydroxyproline in -Xaa-Pro-Gly- sequences in collagens, especially types IV and V. May be involved in the secretory pathway of cells. Has growth suppressive activity in fibroblasts. This is Prolyl 3-hydroxylase 1 from Rattus norvegicus (Rat).